Here is an 836-residue protein sequence, read N- to C-terminus: Exonuclease 1 (836 aa).

The N-domain stretch occupies residues 1–99 (MGIQGLLPQL…TKRERSRKEN (99 aa)). Mg(2+) is bound by residues Asp30 and Asp78. A disordered region spans residues 82-108 (LPMKGDQETKRERSRKENLERAKEHES). Over residues 84–108 (MKGDQETKRERSRKENLERAKEHES) the composition is skewed to basic and acidic residues. The tract at residues 138–230 (KQEKVDYIVA…ILSGCDYLPS (93 aa)) is I-domain. Mg(2+) contacts are provided by Glu150, Asp152, Asp171, Asp173, and Asp226. 3 disordered regions span residues 464 to 488 (RDDS…DPDI), 568 to 641 (EDEC…TNSE), and 744 to 836 (TASA…TSRS). The segment covering 568-577 (EDECHDEDNC) has biased composition (acidic residues). Polar residues-rich tracts occupy residues 578–592 (ETGN…QRSS) and 744–758 (TASA…TSKA).

The protein belongs to the XPG/RAD2 endonuclease family. EXO1 subfamily. Requires Mg(2+) as cofactor.

Its subcellular location is the nucleus. Functionally, putative 5'-&gt;3' double-stranded DNA exonuclease which may also contain a cryptic 3'-&gt;5' double-stranded DNA exonuclease activity. May be involved in DNA mismatch repair (MMR). The polypeptide is Exonuclease 1 (EXO1) (Oryza sativa subsp. japonica (Rice)).